A 188-amino-acid polypeptide reads, in one-letter code: Probable manganese efflux pump MntP (188 aa).

5 helical membrane-spanning segments follow: residues 3 to 23, 66 to 86, 106 to 128, 143 to 163, and 168 to 188; these read ITAT…ASIG, LEWN…RMII, WLLV…GLAF, ATLI…SIIG, and ILGG…HFHG.

Belongs to the MntP (TC 9.B.29) family.

The protein resides in the cell inner membrane. Probably functions as a manganese efflux pump. This chain is Probable manganese efflux pump MntP, found in Shigella flexneri serotype 5b (strain 8401).